The sequence spans 179 residues: Apoptosis regulator DPV022 (179 aa).

The chain crosses the membrane as a helical span at residues 148-170 (VLITNYLKITIFGAILGITAYYI).

In terms of assembly, interacts with host BAX and BAK1.

The protein localises to the host mitochondrion. Its subcellular location is the host membrane. Functionally, plays a role in the inhibition of host apoptosis by sequestering and inactivating several proapoptotic BCL-2 proteins, including BAK1 and BAX. Prevents the conformational activation of both of them. The protein is Apoptosis regulator DPV022 (DPV022) of Deerpox virus (strain Mule deer/United States/W-848-83/1983) (DPV).